We begin with the raw amino-acid sequence, 179 residues long: Probable chorismate pyruvate-lyase (179 aa).

Arg82, Leu120, and Glu165 together coordinate substrate.

The protein belongs to the UbiC family.

It is found in the cytoplasm. The catalysed reaction is chorismate = 4-hydroxybenzoate + pyruvate. It participates in cofactor biosynthesis; ubiquinone biosynthesis. Its function is as follows. Removes the pyruvyl group from chorismate, with concomitant aromatization of the ring, to provide 4-hydroxybenzoate (4HB) for the ubiquinone pathway. The protein is Probable chorismate pyruvate-lyase of Vibrio vulnificus (strain CMCP6).